The chain runs to 772 residues: Ribosomal protein S6 kinase alpha-4 (772 aa).

Residues 33–301 (FELLKVLGTG…AQEVRNHPFF (269 aa)) form the Protein kinase 1 domain. ATP-binding positions include 39–47 (LGTGAYGKV) and Lys-65. Residue Asp-161 is the Proton acceptor of the active site. Ser-196 bears the Phosphoserine; by autocatalysis mark. Residues 302–371 (QGLDWVALAA…VAPSILFDHN (70 aa)) enclose the AGC-kinase C-terminal domain. The residue at position 343 (Ser-343) is a Phosphoserine; by MAPK1, MAPK3 and MAPK14. Ser-347 is modified (phosphoserine). Phosphoserine; by autocatalysis is present on residues Ser-360 and Ser-365. In terms of domain architecture, Protein kinase 2 spans 411 to 674 (DLREPALGQG…LEGLRGSSWL (264 aa)). ATP-binding positions include 417–425 (LGQGSFSVC) and Lys-440. Asp-530 serves as the catalytic Proton acceptor. Thr-542 carries the post-translational modification Phosphothreonine. Position 568 is a phosphothreonine; by MAPK1, MAPK3 and MAPK14 (Thr-568). A phosphoserine mark is found at Ser-634 and Ser-678. Disordered regions lie at residues 673-696 (WLQD…SSGP) and 728-772 (AKRR…LPPS). Phosphothreonine is present on Thr-687. Residues 725–772 (APLAKRRKQKLRSATASRRGSPAPANPGRAPVASKGAPRRANGPLPPS) are required for nuclear targeting and association with MAPK14. At Ser-737 the chain carries Phosphoserine; by autocatalysis. Ser-745 is subject to Phosphoserine.

This sequence belongs to the protein kinase superfamily. AGC Ser/Thr protein kinase family. S6 kinase subfamily. As to quaternary structure, forms a complex with either MAPK1/ERK2 or MAPK3/ERK1 in quiescent cells which transiently dissociates following mitogenic stimulation. Also associates with MAPK14/p38-alpha. Activated RPS6KA4 associates with and phosphorylates the NF-kappa-B p65 subunit RELA. It depends on Mg(2+) as a cofactor. Post-translationally, ser-343 and Thr-568 phosphorylation is required for kinase activity. Ser-343 and Ser-196 are autophosphorylated by the C-terminal kinase domain, and their phosphorylation is essential for the catalytic activity of the N-terminal kinase domain. Phosphorylated at Ser-343, Thr-568 and Thr-687 by MAPK1/ERK2, MAPK3/ERK1 and MAPK14/p38-alpha. Autophosphorylated at Ser-737 and Ser-745 by the N-terminal kinase domain.

It localises to the nucleus. The enzyme catalyses L-seryl-[protein] + ATP = O-phospho-L-seryl-[protein] + ADP + H(+). The catalysed reaction is L-threonyl-[protein] + ATP = O-phospho-L-threonyl-[protein] + ADP + H(+). Activated by phosphorylation at Ser-343, Thr-568 and Thr-687 by MAPK1/ERK2, MAPK3/ERK1 and MAPK14/p38-alpha, and by further autophosphorylation of Ser-196, Ser-360 and Ser-365 by the activated C-terminal kinase domain. In terms of biological role, serine/threonine-protein kinase that is required for the mitogen or stress-induced phosphorylation of the transcription factors CREB1 and ATF1 and for the regulation of the transcription factor RELA, and that contributes to gene activation by histone phosphorylation and functions in the regulation of inflammatory genes. Phosphorylates CREB1 and ATF1 in response to mitogenic or stress stimuli such as UV-C irradiation, epidermal growth factor (EGF) and anisomycin. Plays an essential role in the control of RELA transcriptional activity in response to TNF. Phosphorylates 'Ser-10' of histone H3 in response to mitogenics, stress stimuli and EGF, which results in the transcriptional activation of several immediate early genes, including proto-oncogenes c-fos/FOS and c-jun/JUN. May also phosphorylate 'Ser-28' of histone H3. Mediates the mitogen- and stress-induced phosphorylation of high mobility group protein 1 (HMGN1/HMG14). In lipopolysaccharide-stimulated primary macrophages, acts downstream of the Toll-like receptor TLR4 to limit the production of pro-inflammatory cytokines. Functions probably by inducing transcription of the MAP kinase phosphatase DUSP1 and the anti-inflammatory cytokine interleukin 10 (IL10), via CREB1 and ATF1 transcription factors. In Homo sapiens (Human), this protein is Ribosomal protein S6 kinase alpha-4 (RPS6KA4).